A 146-amino-acid chain; its full sequence is Ribonuclease H (146 aa).

Positions 1–143 (MKKQVTIYTD…CDQLAREAIK (143 aa)) constitute an RNase H type-1 domain. Aspartate 10, glutamate 48, aspartate 70, and aspartate 135 together coordinate Mg(2+).

This sequence belongs to the RNase H family. In terms of assembly, monomer. Requires Mg(2+) as cofactor.

It localises to the cytoplasm. The catalysed reaction is Endonucleolytic cleavage to 5'-phosphomonoester.. In terms of biological role, endonuclease that specifically degrades the RNA of RNA-DNA hybrids. This chain is Ribonuclease H, found in Chlorobium chlorochromatii (strain CaD3).